The sequence spans 1626 residues: DNA topoisomerase 2-beta (1626 aa).

N-acetylalanine is present on Ala2. At Lys3 the chain carries N6-acetyllysine. Residues Gln28, Asn29, Lys33, and Lys34 each participate in a glycyl lysine isopeptide (Lys-Gly) (interchain with G-Cter in SUMO2) cross-link. Residues Asn112, Asn141, and 169-171 contribute to the ATP site; that span reads SSN. Glycyl lysine isopeptide (Lys-Gly) (interchain with G-Cter in SUMO2) cross-links involve residues Lys177 and Lys178. 182–189 serves as a coordination point for ATP; sequence GRNGYGAK. Residues Lys228 and Lys299 each participate in a glycyl lysine isopeptide (Lys-Gly) (interchain with G-Cter in SUMO2) cross-link. The interval 363 to 365 is interaction with DNA; it reads KKK. Residues Lys367 and Lys373 each participate in a glycyl lysine isopeptide (Lys-Gly) (interchain with G-Cter in SUMO2) cross-link. 397-399 provides a ligand contact to ATP; the sequence is QTK. Residues Lys437, Lys439, and Lys446 each participate in a glycyl lysine isopeptide (Lys-Gly) (interchain with G-Cter in SUMO2) cross-link. Residues 476-593 enclose the Toprim domain; the sequence is CTLILTEGDS…SLLKHGFLEE (118 aa). Residues Glu482, Asp562, and Asp564 each contribute to the Mg(2+) site. Residues Lys600, Lys605, Lys635, Lys643, Lys646, Lys676, and Lys712 each participate in a glycyl lysine isopeptide (Lys-Gly) (interchain with G-Cter in SUMO2) cross-link. The Topo IIA-type catalytic domain maps to 736–1189; it reads IPSLVDGFKP…SPSDLWKEDL (454 aa). The O-(5'-phospho-DNA)-tyrosine intermediate role is filled by Tyr826. The interval 1011-1020 is interaction with DNA; it reads KLQTTLTCNS. A Nuclear export signal motif is present at residues 1034–1044; it reads ETVQDILKEFF. Lys1092 is covalently cross-linked (Glycyl lysine isopeptide (Lys-Gly) (interchain with G-Cter in SUMO2)). The disordered stretch occupies residues 1110 to 1140; that stretch reads AWKEAQEKAAEEDETQNQHDDSSSDSGTPSG. Residues Lys1214, Lys1217, Lys1226, and Lys1227 each participate in a glycyl lysine isopeptide (Lys-Gly) (interchain with G-Cter in SUMO2) cross-link. Ser1236 carries the phosphoserine modification. Residues Lys1250, Lys1262, and Lys1271 each participate in a glycyl lysine isopeptide (Lys-Gly) (interchain with G-Cter in SUMO2) cross-link. Positions 1274–1604 are disordered; it reads FDEEFSGAPV…PSLPRTGRAR (331 aa). Thr1292 is subject to Phosphothreonine. Glycyl lysine isopeptide (Lys-Gly) (interchain with G-Cter in SUMO2) cross-links involve residues Lys1323 and Lys1327. 2 stretches are compositionally biased toward basic and acidic residues: residues 1334 to 1344 and 1358 to 1370; these read PWSDDESKSES and SLLRRAAAERPKY. Ser1336, Ser1340, Ser1342, Ser1344, and Ser1358 each carry phosphoserine. Tyr1370 bears the Phosphotyrosine mark. The segment covering 1374–1392 has biased composition (acidic residues); the sequence is FSEEEDDDADDDDDDNNDL. Residue Ser1375 is modified to Phosphoserine. Residue Lys1398 forms a Glycyl lysine isopeptide (Lys-Gly) (interchain with G-Cter in SUMO2) linkage. At Ser1400 the chain carries Phosphoserine. Thr1403 carries the post-translational modification Phosphothreonine. Ser1413 is subject to Phosphoserine. Tyr1421 carries the post-translational modification Phosphotyrosine. At Ser1424 the chain carries Phosphoserine. Residues 1430–1442 show a composition bias toward basic and acidic residues; sequence ATPEKSLHDKKSQ. A Glycyl lysine isopeptide (Lys-Gly) (interchain with G-Cter in SUMO2) cross-link involves residue Lys1440. A phosphoserine mark is found at Ser1441, Ser1452, and Ser1454. Lys1456 participates in a covalent cross-link: Glycyl lysine isopeptide (Lys-Gly) (interchain with G-Cter in SUMO2). A compositionally biased stretch (basic and acidic residues) spans 1456–1466; it reads KSEDDSAKFDS. Phosphoserine occurs at positions 1461, 1466, 1473, and 1476. Residue Lys1490 forms a Glycyl lysine isopeptide (Lys-Gly) (interchain with G-Cter in SUMO2) linkage. The interval 1506 to 1512 is interaction with PLSCR1; sequence KPKRAPK. Ser1522, Ser1524, and Ser1526 each carry phosphoserine. Positions 1539-1549 are enriched in basic residues; the sequence is GKGRGAKKRKA. Ser1550 and Ser1552 each carry phosphoserine. The segment covering 1563–1574 has biased composition (basic residues); it reads KTSKTTSKKPKK. Thr1575 is modified (phosphothreonine). 2 positions are modified to phosphoserine: Ser1576 and Ser1581. The residue at position 1592 (Thr1592) is a Phosphothreonine. Position 1596 is a phosphoserine (Ser1596). A Phosphotyrosine modification is found at Tyr1609. At Ser1613 the chain carries Phosphoserine.

This sequence belongs to the type II topoisomerase family. In terms of assembly, homodimer. Interacts with KIAA1210. Interacts with PLSCR1. Requires Mg(2+) as cofactor. Mn(2+) serves as cofactor. The cofactor is Ca(2+). Post-translationally, (Microbial infection) Deubiquitinated by Epstein-Barr virus BPLF1; leading to stabilized SUMOylated TOP2A trapped in cleavage complexes, which halts the DNA damage response to TOP2A-induced double-strand DNA breaks. In terms of processing, SUMOylated. In terms of tissue distribution, expressed in the tonsil, spleen, lymph node, thymus, skin, pancreas, testis, colon, kidney, liver, brain and lung. Also found in breast, colon and lung carcinomas, Hodgkin's disease, large-cell non-Hodgkin's lymphoma, lymphocytic lymphomas and seminomas.

Its subcellular location is the nucleus. The protein resides in the nucleolus. The protein localises to the nucleoplasm. It carries out the reaction ATP-dependent breakage, passage and rejoining of double-stranded DNA.. Key decatenating enzyme that alters DNA topology by binding to two double-stranded DNA molecules, generating a double-stranded break in one of the strands, passing the intact strand through the broken strand, and religating the broken strand. Plays a role in B-cell differentiation. This is DNA topoisomerase 2-beta (TOP2B) from Homo sapiens (Human).